Reading from the N-terminus, the 297-residue chain is MRTDNDQWDITISVGQTALFVAASRALEARKPHPLAVDHYAEVFCRAAGGDWVAAVEGTDPEHPLQTEFGVDFVNFQGARTKYFDDYFRRVADAGVRQVVLLAAGLDSRAYRLPWADGTVVYELDVPKVLEFKREVLRRHGATPTAERREVPVDLRDDWPAALRANGFDASQPSAWIAEGLLIYLPADAQELLFAGIDALSAPGSFVAIEESAPMPMDVFEVKRAEALASGDPNSFFALVFNEQCAPGEQWFSERGWTASTTTLNECLHEVGRPAPAPDSEAAQMTGSISLMWARKG.

Residues aspartate 125 and 154 to 155 (DL) each bind S-adenosyl-L-methionine.

The protein belongs to the UPF0677 family.

Its function is as follows. Exhibits S-adenosyl-L-methionine-dependent methyltransferase activity. The sequence is that of Putative S-adenosyl-L-methionine-dependent methyltransferase MSMEG_0614/MSMEI_0598 from Mycolicibacterium smegmatis (strain ATCC 700084 / mc(2)155) (Mycobacterium smegmatis).